A 600-amino-acid chain; its full sequence is Methionine--tRNA ligase (600 aa).

The 'HIGH' region motif lies at 12-22 (PYANGPRHIGH). Zn(2+)-binding residues include C144, C147, C157, and C160. Positions 351–355 (KFSSS) match the 'KMSKS' region motif. Residue S354 coordinates ATP.

It belongs to the class-I aminoacyl-tRNA synthetase family. MetG type 1 subfamily. As to quaternary structure, monomer. Zn(2+) is required as a cofactor.

Its subcellular location is the cytoplasm. It catalyses the reaction tRNA(Met) + L-methionine + ATP = L-methionyl-tRNA(Met) + AMP + diphosphate. In terms of biological role, is required not only for elongation of protein synthesis but also for the initiation of all mRNA translation through initiator tRNA(fMet) aminoacylation. This is Methionine--tRNA ligase from Chloroflexus aggregans (strain MD-66 / DSM 9485).